Here is a 225-residue protein sequence, read N- to C-terminus: Riboflavin kinase (225 aa).

Residues 1–89 form a unknown region; sequence MPDIKYLKKL…SRIFSPDLDI (89 aa). The tract at residues 90 to 225 is riboflavin kinase; sequence LELEGKVLKG…LKKQGTENQK (136 aa). 99–104 serves as a coordination point for CDP; sequence GLGEGQ. Residues T128 and N130 each contribute to the Mg(2+) site. FMN contacts are provided by T185 and E193. 198–201 lines the CDP pocket; the sequence is IKLR.

This sequence belongs to the archaeal riboflavin kinase family. Mg(2+) serves as cofactor.

The catalysed reaction is riboflavin + CTP = CDP + FMN + H(+). Its pathway is cofactor biosynthesis; FMN biosynthesis; FMN from riboflavin (CTP route): step 1/1. Its function is as follows. Catalyzes the CTP-dependent phosphorylation of riboflavin (vitamin B2) to form flavin mononucleotide (FMN). The chain is Riboflavin kinase (ribK) from Methanosarcina barkeri (strain Fusaro / DSM 804).